Reading from the N-terminus, the 889-residue chain is Potassium/sodium hyperpolarization-activated cyclic nucleotide-gated channel 2 (889 aa).

Over residues 1 to 10 (MDARGGGGRP) the composition is skewed to gly residues. The segment at 1 to 159 (MDARGGGGRP…GPAGEPRGSQ (159 aa)) is disordered. Topologically, residues 1-215 (MDARGGGGRP…PYSDFRFYWD (215 aa)) are cytoplasmic. Residues 17-55 (TPAPGPPPPPPPAPPQQQPPPPPPPAPPPGPGPAPPQHP) show a composition bias toward pro residues. Over residues 129-155 (GAASGPAPGPGPAEEAGSEEAGPAGEP) the composition is skewed to low complexity. 2 positions are modified to phosphoserine: S146 and S161. The involved in subunit assembly stretch occupies residues 158 to 209 (SQASFMQRQFGALLQPGVNKFSLRMFGSQKAVEREQERVKSAGAWIIHPYSD). The chain crosses the membrane as a helical span at residues 216-236 (FTMLLFMVGNLIIIPVGITFF). The Extracellular portion of the chain corresponds to 237–240 (KDET). The chain crosses the membrane as a helical span at residues 241 to 261 (TAPWIVFNVVSDTFFLMDLVL). Residues 262 to 288 (NFRTGIVIEDNTEIILDPEKIKKKYLR) are Cytoplasmic-facing. A helical transmembrane segment spans residues 289–309 (TWFVVDFVSSIPVDYIFLIVE). Residues 310–317 (KGIDSEVY) are Extracellular-facing. The helical; Voltage-sensor transmembrane segment at 318-338 (KTARALRIVRFTKILSLLRLL) threads the bilayer. Topologically, residues 339-369 (RLSRLIRYIHQWEEIFHMTYDLASAVMRICN) are cytoplasmic. A helical membrane pass occupies residues 370-390 (LISMMLLLCHWDGCLQFLVPM). Over 391 to 413 (LQDFPRNCWVSINGMVNHSWSEL) the chain is Extracellular. N407 carries N-linked (GlcNAc...) asparagine glycosylation. Residues 414-435 (YSFALFKAMSHMLCIGYGRQAP) constitute an intramembrane region (pore-forming). The Extracellular portion of the chain corresponds to 436-440 (ESMTD). The helical transmembrane segment at 441–461 (IWLTMLSMIVGATCYAMFIGH) threads the bilayer. Over 462–889 (ATALIQSLDS…SARSRLSSNL (428 aa)) the chain is Cytoplasmic. Residues M599, G608, E609, I610, C611, R618, T619, and R659 each coordinate 3',5'-cyclic AMP. A Phosphoserine; by PKG/PRKG2 modification is found at S668. At S754 the chain carries Phosphoserine. A disordered region spans residues 754–889 (SPRLVRRPPP…SARSRLSSNL (136 aa)). Omega-N-methylarginine is present on R756. Positions 760–784 (RPPPGPAPAAASPGPPPPASPPGAP) are enriched in pro residues. Phosphoserine occurs at positions 771, 779, 786, 866, and 868. Residues 785–860 (ASPRAPRTSP…TPAARAAAPS (76 aa)) are compositionally biased toward low complexity.

The protein belongs to the potassium channel HCN family. As to quaternary structure, homotetramer. The channel is composed of a homo- or heterotetrameric complex of pore-forming subunits. Heterotetramer with HCN1. Forms an obligate 4:4 complex with accessory subunit PEX5L. Interacts with KCNE2. In terms of processing, phosphorylation at Ser-668 by PRKG2 shifts the voltage-dependence to more negative voltages, hence counteracting the stimulatory effect of cGMP on gating. S-palmitoylated. Post-translationally, N-glycosylated; required for cell surface trafficking of HCN2. As to expression, highly expressed throughout the brain. Detected at low levels in heart.

Its subcellular location is the cell membrane. It carries out the reaction Na(+)(in) = Na(+)(out). It catalyses the reaction K(+)(in) = K(+)(out). The catalysed reaction is NH4(+)(in) = NH4(+)(out). With respect to regulation, activated by cAMP, and at 10-100 times higher concentrations, also by cGMP. cAMP binding causes a conformation change that leads to the assembly of an active tetramer and channel opening. Binding of cAMP removes a tonic inhibition conferred by cyclic nucleotide-binding domain (CNBD) on channel opening. Channel activity is modulated by intracellular chloride ions and pH; acidic pH shifts the activation to more negative voltages. Inhibited by extracellular cesium ions. Its function is as follows. Hyperpolarization-activated ion channel that is permeable to sodium and potassium ions. Displays lower selectivity for K(+) over Na(+) ions. Contributes to the native pacemaker currents in heart (If) and in neurons (Ih). Can also transport ammonium in the distal nephron. Involved in the initiation of neuropathic pain in sensory neurons. This Homo sapiens (Human) protein is Potassium/sodium hyperpolarization-activated cyclic nucleotide-gated channel 2.